The primary structure comprises 173 residues: Shikimate kinase (173 aa).

Residue 14-19 (GAGKST) coordinates ATP. Residue Ser18 coordinates Mg(2+). Residues Asp36, Arg60, and Gly82 each coordinate substrate. Lys120 is an ATP binding site. Residue Arg140 participates in substrate binding.

It belongs to the shikimate kinase family. As to quaternary structure, monomer. Requires Mg(2+) as cofactor.

It is found in the cytoplasm. The catalysed reaction is shikimate + ATP = 3-phosphoshikimate + ADP + H(+). The protein operates within metabolic intermediate biosynthesis; chorismate biosynthesis; chorismate from D-erythrose 4-phosphate and phosphoenolpyruvate: step 5/7. In terms of biological role, catalyzes the specific phosphorylation of the 3-hydroxyl group of shikimic acid using ATP as a cosubstrate. This is Shikimate kinase (aroK) from Wigglesworthia glossinidia brevipalpis.